A 166-amino-acid polypeptide reads, in one-letter code: Sec-independent protein translocase protein TatB (166 aa).

The chain crosses the membrane as a helical span at residues 1–21; that stretch reads MIDIAFSKLAIIGVAALVFIG. The interval 85–146 is disordered; the sequence is DSSLHSAWDE…SGQKSRVISG (62 aa).

The protein belongs to the TatB family. In terms of assembly, the Tat system comprises two distinct complexes: a TatABC complex, containing multiple copies of TatA, TatB and TatC subunits, and a separate TatA complex, containing only TatA subunits. Substrates initially bind to the TatABC complex, which probably triggers association of the separate TatA complex to form the active translocon.

The protein localises to the cell inner membrane. In terms of biological role, part of the twin-arginine translocation (Tat) system that transports large folded proteins containing a characteristic twin-arginine motif in their signal peptide across membranes. Together with TatC, TatB is part of a receptor directly interacting with Tat signal peptides. TatB may form an oligomeric binding site that transiently accommodates folded Tat precursor proteins before their translocation. This chain is Sec-independent protein translocase protein TatB, found in Herminiimonas arsenicoxydans.